The primary structure comprises 218 residues: Serine/threonine-protein phosphatase 2 (218 aa).

Residues Asp22, His24, Asp51, and Asn77 each coordinate Mn(2+). The active-site Proton donor is the His78. His187 is a Mn(2+) binding site.

The protein belongs to the PPP phosphatase family. Requires Mn(2+) as cofactor.

The enzyme catalyses O-phospho-L-seryl-[protein] + H2O = L-seryl-[protein] + phosphate. It catalyses the reaction O-phospho-L-threonyl-[protein] + H2O = L-threonyl-[protein] + phosphate. Its function is as follows. Has been shown, in vitro, to act on Ser, Thr and Tyr-phosphorylated substrates. The polypeptide is Serine/threonine-protein phosphatase 2 (pphB) (Escherichia coli (strain K12)).